We begin with the raw amino-acid sequence, 361 residues long: Deoxyhypusine hydroxylase (361 aa).

HEAT-like PBS-type repeat units lie at residues 59 to 85, 94 to 120, 183 to 211, and 216 to 242; these read LKHELAYVLGQLLNTRALPTLSRVLEN, VRHEAAEALGAIGAEESLPILRKYMQD, QRYRAMFALRDFGAGSKEAVEALADGFRD, and FRHEIAYIFGQLSSPYSIPSLLSRLRD. Residues His61, Glu62, His96, and Glu97 each coordinate Fe cation. Fe cation contacts are provided by His218, Glu219, His251, and Glu252.

The protein belongs to the deoxyhypusine hydroxylase family. Fe(2+) serves as cofactor.

Its subcellular location is the cytoplasm. It is found in the nucleus. The enzyme catalyses [eIF5A protein]-deoxyhypusine + AH2 + O2 = [eIF5A protein]-hypusine + A + H2O. It functions in the pathway protein modification; eIF5A hypusination. In terms of biological role, catalyzes the hydroxylation of the N(6)-(4-aminobutyl)-L-lysine intermediate to form hypusine, an essential post-translational modification only found in mature eIF-5A factor. This chain is Deoxyhypusine hydroxylase, found in Cryptococcus neoformans var. neoformans serotype D (strain JEC21 / ATCC MYA-565) (Filobasidiella neoformans).